A 315-amino-acid polypeptide reads, in one-letter code: Biotin synthase (315 aa).

In terms of domain architecture, Radical SAM core spans 39–266; sequence NSLQFATLLS…KSAIRLTAGR (228 aa). Residues Cys-54, Cys-58, and Cys-61 each contribute to the [4Fe-4S] cluster site. Residues Cys-98, Cys-129, Cys-189, and Arg-261 each coordinate [2Fe-2S] cluster.

It belongs to the radical SAM superfamily. Biotin synthase family. As to quaternary structure, homodimer. [4Fe-4S] cluster serves as cofactor. Requires [2Fe-2S] cluster as cofactor.

The enzyme catalyses (4R,5S)-dethiobiotin + (sulfur carrier)-SH + 2 reduced [2Fe-2S]-[ferredoxin] + 2 S-adenosyl-L-methionine = (sulfur carrier)-H + biotin + 2 5'-deoxyadenosine + 2 L-methionine + 2 oxidized [2Fe-2S]-[ferredoxin]. It participates in cofactor biosynthesis; biotin biosynthesis; biotin from 7,8-diaminononanoate: step 2/2. Its function is as follows. Catalyzes the conversion of dethiobiotin (DTB) to biotin by the insertion of a sulfur atom into dethiobiotin via a radical-based mechanism. The polypeptide is Biotin synthase (Legionella pneumophila (strain Corby)).